The sequence spans 433 residues: Trigger factor (433 aa).

The region spanning 161-246 (GDRVTMDFVG…AKKVEARDLP (86 aa)) is the PPIase FKBP-type domain.

Belongs to the FKBP-type PPIase family. Tig subfamily.

It localises to the cytoplasm. The catalysed reaction is [protein]-peptidylproline (omega=180) = [protein]-peptidylproline (omega=0). Involved in protein export. Acts as a chaperone by maintaining the newly synthesized protein in an open conformation. Functions as a peptidyl-prolyl cis-trans isomerase. The sequence is that of Trigger factor from Idiomarina loihiensis (strain ATCC BAA-735 / DSM 15497 / L2-TR).